The sequence spans 436 residues: UDP-N-acetylglucosamine 1-carboxyvinyltransferase 1 (436 aa).

22–23 (KN) contributes to the phosphoenolpyruvate binding site. UDP-N-acetyl-alpha-D-glucosamine is bound at residue arginine 93. Cysteine 117 (proton donor) is an active-site residue. The residue at position 117 (cysteine 117) is a 2-(S-cysteinyl)pyruvic acid O-phosphothioketal. Residues 122-126 (RPIDQ), aspartate 306, and valine 328 each bind UDP-N-acetyl-alpha-D-glucosamine.

This sequence belongs to the EPSP synthase family. MurA subfamily.

The protein localises to the cytoplasm. It catalyses the reaction phosphoenolpyruvate + UDP-N-acetyl-alpha-D-glucosamine = UDP-N-acetyl-3-O-(1-carboxyvinyl)-alpha-D-glucosamine + phosphate. Its pathway is cell wall biogenesis; peptidoglycan biosynthesis. In terms of biological role, cell wall formation. Adds enolpyruvyl to UDP-N-acetylglucosamine. Essential for cell growth. The polypeptide is UDP-N-acetylglucosamine 1-carboxyvinyltransferase 1 (Bacillus subtilis (strain 168)).